The chain runs to 776 residues: FT-interacting protein 4 (776 aa).

Positions 1-16 (MQRPPPEDFSLKETKP) are enriched in basic and acidic residues. Residues 1 to 23 (MQRPPPEDFSLKETKPHLGGGKV) are disordered. C2 domains lie at 22-142 (KVTG…PQWY), 181-305 (VSGT…SRWF), and 346-474 (YSSD…THSY). Asp-55, Asp-61, Asp-108, Asp-110, and Asp-115 together coordinate Ca(2+). 3 helical membrane-spanning segments follow: residues 577–597 (IMGV…ICVW), 608–628 (ILFI…FLYL), and 719–739 (LFVL…FQVV).

This sequence belongs to the MCTP family. In terms of assembly, interacts with and regulates subcellular localization and trafficking of STM. Requires Ca(2+) as cofactor. Highly expressed in both vegetative and inflorescence shoot apical meristems (SAMs). Accumulates in root meristems. Observed in flowers.

The protein localises to the endoplasmic reticulum membrane. It localises to the cytoplasm. It is found in the vesicle. Its subcellular location is the cell membrane. The protein resides in the endosome membrane. The protein localises to the golgi apparatus membrane. Functionally, required for proliferation and differentiation of shoot stem cells in the shoot apical meristem (SAM), thus determining the appropriate balance between the maintenance of shoot stem cells and their differentiation into other aboveground plant parts via the control of subcellular localization and intercellular trafficking of STM in the shoot apex. Prevents intracellular trafficking of STM to the plasma membrane in cells in the peripheral shoot meristem region thus facilitating STM recycling to the nucleus to maintain stem cells. May function as a signaling molecule by regulating the trafficking of other regulators. The chain is FT-interacting protein 4 from Arabidopsis thaliana (Mouse-ear cress).